Here is a 181-residue protein sequence, read N- to C-terminus: Type II secretion system protein H (181 aa).

Positions 1 to 5 are cleaved as a propeptide — leader sequence; it reads MRQRG. F6 is modified (N-methylphenylalanine). The helical transmembrane segment at 6–29 threads the bilayer; it reads FTLLEIMLVVLLAGVAATLVMMAI.

It belongs to the GSP H family. As to quaternary structure, type II secretion is composed of four main components: the outer membrane complex, the inner membrane complex, the cytoplasmic secretion ATPase and the periplasm-spanning pseudopilus. Interacts with core component OutG. Post-translationally, cleaved by prepilin peptidase. In terms of processing, methylated by prepilin peptidase at the amino group of the N-terminal phenylalanine once the leader sequence is cleaved by prepilin peptidase.

Its subcellular location is the cell inner membrane. In terms of biological role, component of the type II secretion system required for the energy-dependent secretion of extracellular factors such as proteases and toxins from the periplasm. Part of the pseudopilus tip complex that is critical for the recognition and binding of secretion substrates. The chain is Type II secretion system protein H (outH) from Dickeya chrysanthemi (Pectobacterium chrysanthemi).